We begin with the raw amino-acid sequence, 67 residues long: Protein AaeX (67 aa).

A run of 2 helical transmembrane segments spans residues Leu3–Leu23 and Phe43–Ser63.

The protein belongs to the AaeX family.

The protein resides in the cell membrane. The protein is Protein AaeX of Enterobacter sp. (strain 638).